We begin with the raw amino-acid sequence, 116 residues long: Large ribosomal subunit protein uL18 (116 aa).

The protein belongs to the universal ribosomal protein uL18 family. Part of the 50S ribosomal subunit; part of the 5S rRNA/L5/L18/L25 subcomplex. Contacts the 5S and 23S rRNAs.

Its function is as follows. This is one of the proteins that bind and probably mediate the attachment of the 5S RNA into the large ribosomal subunit, where it forms part of the central protuberance. The polypeptide is Large ribosomal subunit protein uL18 (Shewanella frigidimarina (strain NCIMB 400)).